The sequence spans 375 residues: Actin-binding Rho-activating protein (375 aa).

The segment at 37 to 101 (ANENSTRQAQ…ATEVSHIKRK (65 aa)) is disordered. Over residues 80 to 101 (PDGDREGRGSEEATEVSHIKRK) the composition is skewed to basic and acidic residues. Residues serine 150 and serine 182 each carry the phosphoserine modification. The segment at 175 to 197 (EPKWKSDSIDTEDSGYGGDMEER) is disordered. Actin-binding stretches follow at residues 193-293 (DMEE…AERA) and 294-375 (KRAE…TLLE). Interaction with actin regions lie at residues 234–279 (SQVD…GDEG) and 346–375 (MRAR…TLLE).

As to quaternary structure, binds F-actin and ABLIM1, ABLIM2 and ABLIM3. Interaction with ABLIM2 and ABLIM3 enhances activity. Predominantly expressed in heart and skeletal muscle, and expressed at lower levels in adrenal gland, brain, kidney, liver, and testis.

It is found in the cytoplasm. The protein localises to the myofibril. It localises to the sarcomere. The protein resides in the cytoskeleton. Its function is as follows. Acts as an activator of serum response factor (SRF)-dependent transcription possibly by inducing nuclear translocation of MKL1 or MKL2 and through a mechanism requiring Rho-actin signaling. The polypeptide is Actin-binding Rho-activating protein (Rattus norvegicus (Rat)).